Reading from the N-terminus, the 237-residue chain is Ribose-5-phosphate isomerase A (237 aa).

Substrate is bound by residues 29 to 32, 86 to 89, and 99 to 102; these read SGST, DGAD, and KGGG. Catalysis depends on E108, which acts as the Proton acceptor. Position 126 (K126) interacts with substrate.

It belongs to the ribose 5-phosphate isomerase family. Homodimer.

It carries out the reaction aldehydo-D-ribose 5-phosphate = D-ribulose 5-phosphate. It participates in carbohydrate degradation; pentose phosphate pathway; D-ribose 5-phosphate from D-ribulose 5-phosphate (non-oxidative stage): step 1/1. Its function is as follows. Catalyzes the reversible conversion of ribose-5-phosphate to ribulose 5-phosphate. The protein is Ribose-5-phosphate isomerase A of Prochlorococcus marinus (strain MIT 9312).